The sequence spans 96 residues: MKFKPLHDRVLIEVLDSSEKTAGGIIIPDTAQEKPQEGKVIAVGGGAKTEDGKLIPMDVKVGDKVLFGKWSGTEIKIDGKEYSIMKESDIMGISGK.

It belongs to the GroES chaperonin family. Heptamer of 7 subunits arranged in a ring. Interacts with the chaperonin GroEL.

The protein localises to the cytoplasm. Its function is as follows. Together with the chaperonin GroEL, plays an essential role in assisting protein folding. The GroEL-GroES system forms a nano-cage that allows encapsulation of the non-native substrate proteins and provides a physical environment optimized to promote and accelerate protein folding. GroES binds to the apical surface of the GroEL ring, thereby capping the opening of the GroEL channel. The sequence is that of Co-chaperonin GroES from Pelagibacter ubique (strain HTCC1062).